Here is a 610-residue protein sequence, read N- to C-terminus: Elongation factor 4 (610 aa).

A tr-type G domain is found at 11–193 (EKIRNFSIIA…QIVEKVPAPT (183 aa)). GTP is bound by residues 23–28 (DHGKST) and 140–143 (NKID).

Belongs to the TRAFAC class translation factor GTPase superfamily. Classic translation factor GTPase family. LepA subfamily.

It is found in the cell membrane. It catalyses the reaction GTP + H2O = GDP + phosphate + H(+). Its function is as follows. Required for accurate and efficient protein synthesis under certain stress conditions. May act as a fidelity factor of the translation reaction, by catalyzing a one-codon backward translocation of tRNAs on improperly translocated ribosomes. Back-translocation proceeds from a post-translocation (POST) complex to a pre-translocation (PRE) complex, thus giving elongation factor G a second chance to translocate the tRNAs correctly. Binds to ribosomes in a GTP-dependent manner. This Streptococcus pyogenes serotype M1 protein is Elongation factor 4.